The chain runs to 239 residues: 1-(5-phosphoribosyl)-5-[(5-phosphoribosylamino)methylideneamino] imidazole-4-carboxamide isomerase (239 aa).

Asp-12 serves as the catalytic Proton acceptor. Residue Asp-133 is the Proton donor of the active site.

It belongs to the HisA/HisF family.

It localises to the cytoplasm. It carries out the reaction 1-(5-phospho-beta-D-ribosyl)-5-[(5-phospho-beta-D-ribosylamino)methylideneamino]imidazole-4-carboxamide = 5-[(5-phospho-1-deoxy-D-ribulos-1-ylimino)methylamino]-1-(5-phospho-beta-D-ribosyl)imidazole-4-carboxamide. It functions in the pathway amino-acid biosynthesis; L-histidine biosynthesis; L-histidine from 5-phospho-alpha-D-ribose 1-diphosphate: step 4/9. The chain is 1-(5-phosphoribosyl)-5-[(5-phosphoribosylamino)methylideneamino] imidazole-4-carboxamide isomerase from Sulfurihydrogenibium sp. (strain YO3AOP1).